The primary structure comprises 355 residues: Protein RecA (355 aa).

Residue 65–72 coordinates ATP; that stretch reads GPESSGKT.

The protein belongs to the RecA family.

It is found in the cytoplasm. Functionally, can catalyze the hydrolysis of ATP in the presence of single-stranded DNA, the ATP-dependent uptake of single-stranded DNA by duplex DNA, and the ATP-dependent hybridization of homologous single-stranded DNAs. It interacts with LexA causing its activation and leading to its autocatalytic cleavage. This is Protein RecA from Pseudomonas putida (strain ATCC 47054 / DSM 6125 / CFBP 8728 / NCIMB 11950 / KT2440).